The primary structure comprises 206 residues: LexA repressor (206 aa).

The H-T-H motif DNA-binding region spans 28–48 (VREIGEAVGLASSSTVHGHLS). Catalysis depends on for autocatalytic cleavage activity residues Ser-129 and Lys-167.

It belongs to the peptidase S24 family. As to quaternary structure, homodimer.

It carries out the reaction Hydrolysis of Ala-|-Gly bond in repressor LexA.. Functionally, represses a number of genes involved in the response to DNA damage (SOS response), including recA and lexA. In the presence of single-stranded DNA, RecA interacts with LexA causing an autocatalytic cleavage which disrupts the DNA-binding part of LexA, leading to derepression of the SOS regulon and eventually DNA repair. The sequence is that of LexA repressor from Staphylococcus epidermidis (strain ATCC 35984 / DSM 28319 / BCRC 17069 / CCUG 31568 / BM 3577 / RP62A).